Reading from the N-terminus, the 424-residue chain is T-DNA border endonuclease VirD2 (424 aa).

2 disordered regions span residues 206–269 (AQKI…GSSI) and 321–424 (RPVT…RGGT). Positions 212–221 (EDTDFDETSP) are enriched in acidic residues. Basic and acidic residues predominate over residues 243 to 261 (EPDRATRHDKQPLEQHARF). The span at 330–339 (TVKRQQRSKR) shows a compositional bias: basic residues. 2 stretches are compositionally biased toward basic and acidic residues: residues 394-408 (SPKR…ELGG) and 415-424 (NRRDDGRGGT).

Tumor formation by A.tumefaciens involves the transfer and integration of a defined segment (T-DNA) of Ti plasmid DNA into the plant nuclear genome. The virD operon encodes a site-specific endonuclease that cleaves at a unique site within both 24 bp direct repeats flanking the T-DNA. This is T-DNA border endonuclease VirD2 (virD2) from Rhizobium radiobacter (Agrobacterium tumefaciens).